A 414-amino-acid polypeptide reads, in one-letter code: Ornithine aminotransferase (414 aa).

An intrachain disulfide couples C154 to C163. K262 is subject to N6-(pyridoxal phosphate)lysine.

The protein belongs to the class-III pyridoxal-phosphate-dependent aminotransferase family. In terms of assembly, homodimer. Requires pyridoxal 5'-phosphate as cofactor. Post-translationally, the disulfide bond between Cys-154 and Cys-163 is reduced by TRX1 which increases OAT catalytic activity.

Its subcellular location is the cytoplasm. The catalysed reaction is a 2-oxocarboxylate + L-ornithine = L-glutamate 5-semialdehyde + an L-alpha-amino acid. The enzyme catalyses L-ornithine + 2-oxoglutarate = L-glutamate 5-semialdehyde + L-glutamate. Its pathway is amino-acid biosynthesis; L-proline biosynthesis; L-glutamate 5-semialdehyde from L-ornithine: step 1/1. With respect to regulation, unlike for mammalian OATs, activity is increased by TRX1-mediated reduction of the disulfide bond between Cys-154 and Cys-163. Binding to TRX1 may also induce conformational changes that facilitate substrate binding. Functionally, catalyzes the transamination of alpha-ketoglutarate with ornithine or N-acetylornithine and of glutamate-5-semialdehyde with glutamate and alanine. This is Ornithine aminotransferase from Plasmodium yoelii yoelii.